The sequence spans 266 residues: Chymotrypsin-like elastase family member 1 (266 aa).

Residues methionine 1–serine 16 form the signal peptide. Residues threonine 17–arginine 26 constitute a propeptide, activation peptide. The 238-residue stretch at valine 27–alanine 264 folds into the Peptidase S1 domain. Cysteines 56 and 72 form a disulfide. Catalysis depends on histidine 71, which acts as the Charge relay system. Residues aspartate 85, asparagine 87, glutamine 90, and glutamate 95 each contribute to the Ca(2+) site. An N-linked (GlcNAc...) asparagine glycan is attached at asparagine 87. Catalysis depends on aspartate 119, which acts as the Charge relay system. 3 disulfides stabilise this stretch: cysteine 153–cysteine 220, cysteine 184–cysteine 200, and cysteine 210–cysteine 240. Serine 214 functions as the Charge relay system in the catalytic mechanism. A glycan (N-linked (GlcNAc...) asparagine) is linked at asparagine 241.

Belongs to the peptidase S1 family. Elastase subfamily. The cofactor is Ca(2+). As to expression, pancreas.

Its subcellular location is the secreted. The catalysed reaction is Hydrolysis of proteins, including elastin. Preferential cleavage: Ala-|-Xaa.. Serine proteases that hydrolyze many proteins in addition to elastin. The protein is Chymotrypsin-like elastase family member 1 (CELA1) of Bos taurus (Bovine).